A 442-amino-acid chain; its full sequence is tRNA modification GTPase MnmE (442 aa).

3 residues coordinate (6S)-5-formyl-5,6,7,8-tetrahydrofolate: arginine 24, glutamate 82, and lysine 120. A TrmE-type G domain is found at 217–367; it reads GLHIVITGEP…LISLIKKKAE (151 aa). Residues 227–232, 246–252, and 271–274 contribute to the GTP site; these read NVGKST, SEYAGTT, and DTAG. A Mg(2+)-binding site is contributed by serine 231. Residue serine 246 participates in K(+) binding. Threonine 252 serves as a coordination point for Mg(2+). Residue lysine 442 coordinates (6S)-5-formyl-5,6,7,8-tetrahydrofolate.

The protein belongs to the TRAFAC class TrmE-Era-EngA-EngB-Septin-like GTPase superfamily. TrmE GTPase family. As to quaternary structure, homodimer. Heterotetramer of two MnmE and two MnmG subunits. It depends on K(+) as a cofactor.

The protein resides in the cytoplasm. Functionally, exhibits a very high intrinsic GTPase hydrolysis rate. Involved in the addition of a carboxymethylaminomethyl (cmnm) group at the wobble position (U34) of certain tRNAs, forming tRNA-cmnm(5)s(2)U34. This Wolbachia pipientis subsp. Culex pipiens (strain wPip) protein is tRNA modification GTPase MnmE.